A 341-amino-acid polypeptide reads, in one-letter code: Mediator of RNA polymerase II transcription subunit 18 (341 aa).

The interval 139 to 216 (KVMDKEKVQS…KEHSEGNASQ (78 aa)) is disordered. The segment covering 163–211 (EDKKENIKKEESGEEVKGSGEEVKGSGEEVKGSGEEAKKSGEEAKEHSE) has biased composition (basic and acidic residues).

It belongs to the Mediator complex subunit 18 family. In terms of assembly, component of the Mediator complex.

The protein resides in the nucleus. Functionally, component of the Mediator complex, a coactivator involved in the regulated transcription of nearly all RNA polymerase II-dependent genes. Mediator functions as a bridge to convey information from gene-specific regulatory proteins to the basal RNA polymerase II transcription machinery. Mediator is recruited to promoters by direct interactions with regulatory proteins and serves as a scaffold for the assembly of a functional preinitiation complex with RNA polymerase II and the general transcription factors. The polypeptide is Mediator of RNA polymerase II transcription subunit 18 (SRB5) (Debaryomyces hansenii (strain ATCC 36239 / CBS 767 / BCRC 21394 / JCM 1990 / NBRC 0083 / IGC 2968) (Yeast)).